We begin with the raw amino-acid sequence, 638 residues long: Bifunctional protein glk (638 aa).

A disordered region spans residues 1–20 (MSTGVQTKAAPGAGQHADGP). The interval 1-341 (MSTGVQTKAA…QLSNRAGGSS (341 aa)) is glucokinase. ATP is bound at residue 24-29 (ADIGGT). Positions 342 to 418 (SAVFERIRQM…LKLATGLTGT (77 aa)) constitute an HTH rpiR-type domain. A putative HTH-type transcriptional regulator region spans residues 342-638 (SAVFERIRQM…SHGAASSARD (297 aa)). A DNA-binding region (H-T-H motif) is located at residues 378–397 (IVDIARKADVSQPTVIRFCR). The SIS domain occupies 462 to 601 (AIDLLNGARR…AVGVAIRRAV (140 aa)).

In the N-terminal section; belongs to the bacterial glucokinase family.

The protein localises to the cytoplasm. It carries out the reaction D-glucose + ATP = D-glucose 6-phosphate + ADP + H(+). The chain is Bifunctional protein glk (glk) from Paraburkholderia xenovorans (strain LB400).